Reading from the N-terminus, the 255-residue chain is GTP cyclohydrolase III 1 (255 aa).

It belongs to the archaeal-type GTP cyclohydrolase family.

The enzyme catalyses GTP + 3 H2O = 2-amino-5-formylamino-6-(5-phospho-D-ribosylamino)pyrimidin-4(3H)-one + 2 phosphate + 2 H(+). In terms of biological role, catalyzes the formation of 2-amino-5-formylamino-6-ribofuranosylamino-4(3H)-pyrimidinone ribonucleotide monophosphate and inorganic phosphate from GTP. Also has an independent pyrophosphate phosphohydrolase activity. The polypeptide is GTP cyclohydrolase III 1 (gch31) (Halobacterium salinarum (strain ATCC 700922 / JCM 11081 / NRC-1) (Halobacterium halobium)).